We begin with the raw amino-acid sequence, 519 residues long: Na(+)/H(+) exchange regulatory cofactor NHE-RF3 (519 aa).

Positions 9 to 90 constitute a PDZ 1 domain; the sequence is ECKLSKQEGQ…SVTLLVLDGD (82 aa). Phosphoserine is present on residues serine 108, serine 148, serine 192, serine 250, serine 334, and serine 348. 2 consecutive PDZ domains span residues 134-215 and 243-323; these read RLCY…VDKE and IVEM…VDKE. Positions 347 to 374 are disordered; sequence GSVKEAPAPTPTSLEVSSPPDTTEEVDH. Positions 357–367 are enriched in polar residues; the sequence is PTSLEVSSPPD. Residues 378–458 enclose the PDZ 4 domain; the sequence is LCRLAKGENG…NVTLLVCGKK (81 aa). At threonine 451 the chain carries Phosphothreonine. The interval 479–519 is disordered; the sequence is DTPPDSKEGIVVESNHDSHMAKERAHSTASHSSSNSEDTEM. Basic and acidic residues predominate over residues 482–504; that stretch reads PDSKEGIVVESNHDSHMAKERAH. Residues serine 492, serine 508, serine 510, serine 511, serine 512, and serine 514 each carry the phosphoserine modification. Low complexity predominate over residues 505–519; the sequence is STASHSSSNSEDTEM.

Belongs to the NHER family. Interacts with PDZK1IP1 and ABCC2. Interacts (via PDZ domains 1 and 3) with SCARB1 (C-terminal domain). Forms a heterodimeric complex with NHERF1. Interacts with AKAP2, BCR, CFTR, SLC22A12, SLC22A4, SLC22A5, NHERF2 and SLC17A1. Component of a complex, composed of PDZK1, SYNGAP1, KLHL17 and NMDA receptors. Interacts (via PDZ1 domain) directly with KLHL17; the interaction is important for integrity of actin cytoskeleton structures in neurons. Interacts (via the first PDZ domain) with PTGIR (via non-isoprenylated C-terminus). Interacts (via C-terminal PDZ domain) with SLC26A6 (via C-terminal domain). Interacts (via C-terminal PDZ domain) with SLC9A3 (via C-terminal domain). Interacts (via PDZ domains 1 and 3) with SLC5A8 (via PDZ-binding motif); interaction increases nicotinate transport activity of SLC5A8. As to expression, expression is limited to epithelial cells. Expressed in the kidney (brush border of proximal tubule), pancreas, liver, and small intestine. Expressed at a lower level in the adrenal cortex, testis and stomach. Overexpressed in breast, renal and lung carcinomas.

It localises to the membrane. It is found in the cell membrane. Functionally, a scaffold protein that connects plasma membrane proteins and regulatory components, regulating their surface expression in epithelial cells apical domains. May be involved in the coordination of a diverse range of regulatory processes for ion transport and second messenger cascades. In complex with NHERF1, may cluster proteins that are functionally dependent in a mutual fashion and modulate the trafficking and the activity of the associated membrane proteins. May play a role in the cellular mechanisms associated with multidrug resistance through its interaction with ABCC2 and PDZK1IP1. May potentiate the CFTR chloride channel activity. Required for normal cell-surface expression of SCARB1. Plays a role in maintaining normal plasma cholesterol levels via its effects on SCARB1. Plays a role in the normal localization and function of the chloride-anion exchanger SLC26A6 to the plasma membrane in the brush border of the proximal tubule of the kidney. May be involved in the regulation of proximal tubular Na(+)-dependent inorganic phosphate cotransport therefore playing an important role in tubule function. The chain is Na(+)/H(+) exchange regulatory cofactor NHE-RF3 (PDZK1) from Homo sapiens (Human).